Here is a 40-residue protein sequence, read N- to C-terminus: Photosystem II reaction center protein J (40 aa).

The helical transmembrane segment at isoleucine 8–phenylalanine 28 threads the bilayer.

It belongs to the PsbJ family. In terms of assembly, PSII is composed of 1 copy each of membrane proteins PsbA, PsbB, PsbC, PsbD, PsbE, PsbF, PsbH, PsbI, PsbJ, PsbK, PsbL, PsbM, PsbT, PsbX, PsbY, PsbZ, Psb30/Ycf12, at least 3 peripheral proteins of the oxygen-evolving complex and a large number of cofactors. It forms dimeric complexes.

The protein localises to the plastid. It localises to the chloroplast thylakoid membrane. One of the components of the core complex of photosystem II (PSII). PSII is a light-driven water:plastoquinone oxidoreductase that uses light energy to abstract electrons from H(2)O, generating O(2) and a proton gradient subsequently used for ATP formation. It consists of a core antenna complex that captures photons, and an electron transfer chain that converts photonic excitation into a charge separation. The protein is Photosystem II reaction center protein J of Cycas taitungensis (Prince sago).